We begin with the raw amino-acid sequence, 444 residues long: tRNA (guanine-N(7)-)-methyltransferase non-catalytic subunit TRM82 (444 aa).

WD repeat units follow at residues 1–47, 48–99, 100–147, 148–192, 193–237, 238–279, and 308–354; these read MSVI…WSDD, FDKI…LGAP, PIYS…KRFC, FSKR…EPIL, GHVS…DKWL, FGHK…STFD, and FAVS…ITFP. The tract at residues 55–92 is disordered; that stretch reads RNTTAKEQQGQSSENENENKKLKSNKGDSIKRTAAKVP. The span at 71–85 shows a compositional bias: basic and acidic residues; it reads NENKKLKSNKGDSIK. Ser93 bears the Phosphoserine mark.

The protein belongs to the WD repeat TRM82 family. As to quaternary structure, forms a heterodimer with the catalytic subunit TRM8.

Its subcellular location is the nucleus. Its pathway is tRNA modification; N(7)-methylguanine-tRNA biosynthesis. Required for the formation of N(7)-methylguanine at position 46 (m7G46) in tRNA, a modification required to maintain stability of tRNAs; its absence resulting in tRNA decay. In the complex, it is required to stabilize and induce conformational changes of the catalytic subunit. In Saccharomyces cerevisiae (strain ATCC 204508 / S288c) (Baker's yeast), this protein is tRNA (guanine-N(7)-)-methyltransferase non-catalytic subunit TRM82.